Reading from the N-terminus, the 563-residue chain is MMRSDEIKKGYNRAPHRSLLRATGLKDEDFDKPFIGVANSFIELIPGHYFLNKVAEVIKNEIRANGCVPFEFNTIGVDDGIAMGHDGMLYSLPSREIIANSIETVMNAHKLDAMIAIPNCDKIVPGMIMGALRVDVPTVFVSGGPMAAGHMDDGTPIDLATVFEGVGEYEAGEITEETLAEMECNACPSGGSCSGMFTANSMNTLMEAMGIALPGNGTILALTPERTELYKKAARRICEIAKSEAAEREKFRMRNILNENAVRNAFAVDMAMGGSSNTVLHMLAIAKEAEVDFNLEDINMISKRVSHIAKISPSLTTVHMEDINTAGGVSSVMHEMHKRGDDILIDNPTITGESLYERIKDARILDTNIIHTIDNPFSEVGGLAILYGNLAEQGAVIKTAGITGDRAFTGTAVCFDSQDEAIEGILSGKVKAGNVVVIRYEGPKGGPGMQEMLSPTSLIMGMGLGDKVALITDGRFSGATRGASIGHVSPEAAEGGLIGLLEDGDEIHLDVDNYILEAKLTFEEIAERKDKFKPVVKPLKSKWLRQYRALVTNASNGAVLEAE.

Residue Asp79 coordinates Mg(2+). Cys120 serves as a coordination point for [2Fe-2S] cluster. The Mg(2+) site is built by Asp121 and Lys122. Lys122 is subject to N6-carboxylysine. A [2Fe-2S] cluster-binding site is contributed by Cys193. Glu451 serves as a coordination point for Mg(2+). The active-site Proton acceptor is the Ser477.

Belongs to the IlvD/Edd family. As to quaternary structure, homodimer. Requires [2Fe-2S] cluster as cofactor. The cofactor is Mg(2+).

The enzyme catalyses (2R)-2,3-dihydroxy-3-methylbutanoate = 3-methyl-2-oxobutanoate + H2O. It carries out the reaction (2R,3R)-2,3-dihydroxy-3-methylpentanoate = (S)-3-methyl-2-oxopentanoate + H2O. It functions in the pathway amino-acid biosynthesis; L-isoleucine biosynthesis; L-isoleucine from 2-oxobutanoate: step 3/4. The protein operates within amino-acid biosynthesis; L-valine biosynthesis; L-valine from pyruvate: step 3/4. Functionally, functions in the biosynthesis of branched-chain amino acids. Catalyzes the dehydration of (2R,3R)-2,3-dihydroxy-3-methylpentanoate (2,3-dihydroxy-3-methylvalerate) into 2-oxo-3-methylpentanoate (2-oxo-3-methylvalerate) and of (2R)-2,3-dihydroxy-3-methylbutanoate (2,3-dihydroxyisovalerate) into 2-oxo-3-methylbutanoate (2-oxoisovalerate), the penultimate precursor to L-isoleucine and L-valine, respectively. This Sulfurovum sp. (strain NBC37-1) protein is Dihydroxy-acid dehydratase.